We begin with the raw amino-acid sequence, 65 residues long: Large ribosomal subunit protein uL29 (65 aa).

This sequence belongs to the universal ribosomal protein uL29 family.

This chain is Large ribosomal subunit protein uL29, found in Mycoplasmopsis synoviae (strain 53) (Mycoplasma synoviae).